Reading from the N-terminus, the 274-residue chain is Ribosomal RNA small subunit methyltransferase A (274 aa).

S-adenosyl-L-methionine is bound by residues His-15, Leu-17, Gly-42, Glu-64, Asp-89, and Asn-108.

Belongs to the class I-like SAM-binding methyltransferase superfamily. rRNA adenine N(6)-methyltransferase family. RsmA subfamily.

It is found in the cytoplasm. It carries out the reaction adenosine(1518)/adenosine(1519) in 16S rRNA + 4 S-adenosyl-L-methionine = N(6)-dimethyladenosine(1518)/N(6)-dimethyladenosine(1519) in 16S rRNA + 4 S-adenosyl-L-homocysteine + 4 H(+). Functionally, specifically dimethylates two adjacent adenosines (A1518 and A1519) in the loop of a conserved hairpin near the 3'-end of 16S rRNA in the 30S particle. May play a critical role in biogenesis of 30S subunits. In Prochlorococcus marinus (strain MIT 9301), this protein is Ribosomal RNA small subunit methyltransferase A.